A 398-amino-acid polypeptide reads, in one-letter code: Succinyl-diaminopimelate desuccinylase (398 aa).

Zn(2+) is bound at residue His-73. Asp-75 is an active-site residue. Asp-106 is a binding site for Zn(2+). Glu-140 acts as the Proton acceptor in catalysis. 3 residues coordinate Zn(2+): Glu-141, Glu-169, and His-366.

This sequence belongs to the peptidase M20A family. DapE subfamily. As to quaternary structure, homodimer. It depends on Zn(2+) as a cofactor. Co(2+) serves as cofactor.

It carries out the reaction N-succinyl-(2S,6S)-2,6-diaminopimelate + H2O = (2S,6S)-2,6-diaminopimelate + succinate. It functions in the pathway amino-acid biosynthesis; L-lysine biosynthesis via DAP pathway; LL-2,6-diaminopimelate from (S)-tetrahydrodipicolinate (succinylase route): step 3/3. Functionally, catalyzes the hydrolysis of N-succinyl-L,L-diaminopimelic acid (SDAP), forming succinate and LL-2,6-diaminopimelate (DAP), an intermediate involved in the bacterial biosynthesis of lysine and meso-diaminopimelic acid, an essential component of bacterial cell walls. This chain is Succinyl-diaminopimelate desuccinylase, found in Agrobacterium fabrum (strain C58 / ATCC 33970) (Agrobacterium tumefaciens (strain C58)).